Reading from the N-terminus, the 102-residue chain is MDIKQTAVAGSLESSDLMITVSPNDEQTITITLDSSVEKQFGNHIRQLIHQTLVNLKVTAAKVEAVDKGALDCTIQARTIAAVHRAAGVDQYDWKEIDSWNV.

Ser14 is subject to O-(phosphoribosyl dephospho-coenzyme A)serine.

It belongs to the CitD family. Oligomer with a subunit composition of (alpha,beta,gamma)6.

The protein localises to the cytoplasm. In terms of biological role, covalent carrier of the coenzyme of citrate lyase. The protein is Citrate lyase acyl carrier protein of Streptococcus pyogenes serotype M18 (strain MGAS8232).